We begin with the raw amino-acid sequence, 550 residues long: CTP synthase (550 aa).

An amidoligase domain region spans residues 1–270; it reads MTKYVFVTGG…DRIICEELKL (270 aa). Position 13 (serine 13) interacts with CTP. A UTP-binding site is contributed by serine 13. Residues 14–19 and aspartate 71 contribute to the ATP site; that span reads SLGKGI. Positions 71 and 144 each coordinate Mg(2+). CTP is bound by residues 151-153, 191-196, and lysine 227; these read DIE and KTKPTQ. Residues 191–196 and lysine 227 contribute to the UTP site; that span reads KTKPTQ. Residues 295–547 form the Glutamine amidotransferase type-1 domain; that stretch reads TIGMVGKYVD…VEAALANKQA (253 aa). Glycine 356 provides a ligand contact to L-glutamine. Cysteine 383 functions as the Nucleophile; for glutamine hydrolysis in the catalytic mechanism. L-glutamine-binding positions include 384–387, glutamate 407, and arginine 473; that span reads LGMQ. Residues histidine 520 and glutamate 522 contribute to the active site.

The protein belongs to the CTP synthase family. As to quaternary structure, homotetramer.

It catalyses the reaction UTP + L-glutamine + ATP + H2O = CTP + L-glutamate + ADP + phosphate + 2 H(+). The catalysed reaction is L-glutamine + H2O = L-glutamate + NH4(+). It carries out the reaction UTP + NH4(+) + ATP = CTP + ADP + phosphate + 2 H(+). The protein operates within pyrimidine metabolism; CTP biosynthesis via de novo pathway; CTP from UDP: step 2/2. With respect to regulation, allosterically activated by GTP, when glutamine is the substrate; GTP has no effect on the reaction when ammonia is the substrate. The allosteric effector GTP functions by stabilizing the protein conformation that binds the tetrahedral intermediate(s) formed during glutamine hydrolysis. Inhibited by the product CTP, via allosteric rather than competitive inhibition. In terms of biological role, catalyzes the ATP-dependent amination of UTP to CTP with either L-glutamine or ammonia as the source of nitrogen. Regulates intracellular CTP levels through interactions with the four ribonucleotide triphosphates. The chain is CTP synthase from Burkholderia lata (strain ATCC 17760 / DSM 23089 / LMG 22485 / NCIMB 9086 / R18194 / 383).